Here is a 120-residue protein sequence, read N- to C-terminus: Protein EPIDERMAL PATTERNING FACTOR 2 (120 aa).

The N-terminal stretch at 1–25 (MTKFVRKYMFCLVLVFAACSLVVNS) is a signal peptide. Intrachain disulfides connect cysteine 76–cysteine 107, cysteine 80–cysteine 86, cysteine 83–cysteine 109, and cysteine 95–cysteine 101.

It belongs to the plant cysteine rich small secretory peptide family. Epidermal patterning factor subfamily. As to quaternary structure, interacts with ERECTA, ERL1 and TMM. Expressed in leaves, especially by the MMCs and their early descendants cells (stomatal lineage cells) including guard mother cells (GMCs).

The protein resides in the secreted. Controls stomatal patterning. Regulates the number of cells that enter, and remain in, the stomatal lineage by inhibiting protodermal cells from adopting the meristemoid mother cell (MMC) fate in a non-cell-autonomous manner. Mediates stomatal development inhibition. MEPF2: mobile signal controlling stomatal development in a non-cell-autonomous manner. Uses ERECTA as major receptor. Inactivated by cleavage by CRSP (AC Q9LNU1). May act by competing with somatogen (AC Q9SV72) for the same receptor, TMM (AC Q9SSD1). The polypeptide is Protein EPIDERMAL PATTERNING FACTOR 2 (Arabidopsis thaliana (Mouse-ear cress)).